A 262-amino-acid polypeptide reads, in one-letter code: Zinc-finger homeodomain protein 6 (262 aa).

Composition is skewed to basic and acidic residues over residues 1-25 (MEVR…DHHR) and 36-47 (NKEKPTTKRNGS). A disordered region spans residues 1–93 (MEVREKKDEK…ECQKNHAASS (93 aa)). A ZF-HD dimerization-type; degenerate zinc finger spans residues 82-131 (YRECQKNHAASSGGHVVDGCGEFMSSGEEGTVESLLCAACDCHRSFHRKE). Residues 198 to 261 (KKRFRTKFNE…NNKQAAKKKD (64 aa)) constitute a DNA-binding region (homeobox).

In terms of assembly, homo- and heterodimer with other ZFHD proteins. Interacts with MIF1 and MIF3; these interactions prevent nuclear localization and DNA-binding to inhibit transcription regulation activity. Binds to ZHD1, ZHD2, ZHD10 and ZHD11. In terms of tissue distribution, expressed in seedlings, roots, leaves, stems, flowers and inflorescence.

The protein resides in the nucleus. Functionally, putative transcription factor. The sequence is that of Zinc-finger homeodomain protein 6 (ZHD6) from Arabidopsis thaliana (Mouse-ear cress).